Consider the following 102-residue polypeptide: Small ribosomal subunit protein uS10 (102 aa).

Belongs to the universal ribosomal protein uS10 family. As to quaternary structure, part of the 30S ribosomal subunit.

Its function is as follows. Involved in the binding of tRNA to the ribosomes. This Opitutus terrae (strain DSM 11246 / JCM 15787 / PB90-1) protein is Small ribosomal subunit protein uS10.